The chain runs to 369 residues: Chorismate synthase (369 aa).

Arg-48 and Arg-54 together coordinate NADP(+). FMN contacts are provided by residues 125-127 (RSS), 238-239 (NA), Gly-283, 298-302 (KPTSS), and Arg-324.

Belongs to the chorismate synthase family. Homotetramer. FMNH2 is required as a cofactor.

It carries out the reaction 5-O-(1-carboxyvinyl)-3-phosphoshikimate = chorismate + phosphate. The protein operates within metabolic intermediate biosynthesis; chorismate biosynthesis; chorismate from D-erythrose 4-phosphate and phosphoenolpyruvate: step 7/7. Its function is as follows. Catalyzes the anti-1,4-elimination of the C-3 phosphate and the C-6 proR hydrogen from 5-enolpyruvylshikimate-3-phosphate (EPSP) to yield chorismate, which is the branch point compound that serves as the starting substrate for the three terminal pathways of aromatic amino acid biosynthesis. This reaction introduces a second double bond into the aromatic ring system. This chain is Chorismate synthase, found in Acidiphilium cryptum (strain JF-5).